A 291-amino-acid chain; its full sequence is Inhibitory synaptic factor 1 (291 aa).

The tract at residues 1–25 (MNIRGAPDLGQPSDDPNSGGERERI) is disordered. Positions 30 to 63 (KMVIGQLEGILRELKEVAKELREVVSQIDKLTSD) form a coiled coil. 2 disordered regions span residues 120-186 (TPSD…ERVR) and 201-291 (EEGD…KGKN). Residues 201–213 (EEGDGEEVEEEEA) are compositionally biased toward acidic residues. Residues 262–284 (RNSSTQTVSDKSTQTVLPYTATK) show a composition bias toward polar residues.

This sequence belongs to the INSYN1 family. In terms of assembly, interacts with GPHN.

The protein resides in the postsynaptic density. In terms of biological role, component of the protein machinery at the inhibitory synapses, probably acting as a scaffold. Inhibitory synapses dampen neuronal activity through postsynaptic hyperpolarization. This synaptic inhibition is fundamental for the functioning of the central nervous system, shaping and orchestrating the flow of information through neuronal networks to generate a precise neural code. The chain is Inhibitory synaptic factor 1 (Insyn1) from Rattus norvegicus (Rat).